Reading from the N-terminus, the 436-residue chain is MSERQQLTNARGERIAIVSGLRTPFAKQATAFHGVSALDMGKMVVNELISRSELDPKLIEQLVYGQVVQMPAAPNIAREIVLGTGMDISTDAYSVTRACATSFQSTVNVAESILTGNMEIGIAGGSDSSSVLPIGVSKKLAHALVDLNKARSFGQKLSIFRRLGLKDLLPVPPAVAEYSTGLSMGQTAEQMAKTYNISRADQDALAHRSHTLATETWNAGKLAEEVMAAHVPPYKAFIDRDNNIRENSKLESYAKLRPAFDRKHGSVTAANSTPLTDGASAVLLMSEGRAKALGYTPIGYIKSYAFTAIDVWEDMLMGPSYATPMALKRAGMELEDLTLIEMHEAFAAQTLANMQMFGSKKFAEEKLGRNRAIGEIDMSKFNVLGGSLAYGHPFAATGTRLITQVCHELKRRGGGTGLATACAAGGLGAAMIVEVE.

Cys-99 serves as the catalytic Acyl-thioester intermediate. Active-site proton acceptor residues include His-392 and Cys-422.

Belongs to the thiolase-like superfamily. Thiolase family. In terms of assembly, heterotetramer of two alpha chains (FadJ) and two beta chains (FadI).

The protein localises to the cytoplasm. The catalysed reaction is an acyl-CoA + acetyl-CoA = a 3-oxoacyl-CoA + CoA. The protein operates within lipid metabolism; fatty acid beta-oxidation. In terms of biological role, catalyzes the final step of fatty acid oxidation in which acetyl-CoA is released and the CoA ester of a fatty acid two carbons shorter is formed. This is 3-ketoacyl-CoA thiolase from Shewanella piezotolerans (strain WP3 / JCM 13877).